We begin with the raw amino-acid sequence, 145 residues long: Trafficking protein particle complex subunit 1 (145 aa).

Belongs to the TRAPP small subunits family. BET5 subfamily. Part of the multisubunit transport protein particle (TRAPP) complex. The heterodimer TRAPPC6B-TRAPPC3 interacts with TRAPPC1 likely providing a core for TRAPP complex formation.

It is found in the golgi apparatus. The protein localises to the cis-Golgi network. The protein resides in the endoplasmic reticulum. In terms of biological role, may play a role in vesicular transport from endoplasmic reticulum to Golgi. The chain is Trafficking protein particle complex subunit 1 from Mus musculus (Mouse).